Consider the following 179-residue polypeptide: Acireductone dioxygenase (179 aa).

The Fe(2+) site is built by H100, H102, E106, and H145. Residues H100, H102, E106, and H145 each coordinate Ni(2+).

It belongs to the acireductone dioxygenase (ARD) family. In terms of assembly, monomer. Requires Fe(2+) as cofactor. It depends on Ni(2+) as a cofactor.

The catalysed reaction is 1,2-dihydroxy-5-(methylsulfanyl)pent-1-en-3-one + O2 = 3-(methylsulfanyl)propanoate + CO + formate + 2 H(+). It carries out the reaction 1,2-dihydroxy-5-(methylsulfanyl)pent-1-en-3-one + O2 = 4-methylsulfanyl-2-oxobutanoate + formate + 2 H(+). It participates in amino-acid biosynthesis; L-methionine biosynthesis via salvage pathway; L-methionine from S-methyl-5-thio-alpha-D-ribose 1-phosphate: step 5/6. In terms of biological role, catalyzes 2 different reactions between oxygen and the acireductone 1,2-dihydroxy-3-keto-5-methylthiopentene (DHK-MTPene) depending upon the metal bound in the active site. Fe-containing acireductone dioxygenase (Fe-ARD) produces formate and 2-keto-4-methylthiobutyrate (KMTB), the alpha-ketoacid precursor of methionine in the methionine recycle pathway. Ni-containing acireductone dioxygenase (Ni-ARD) produces methylthiopropionate, carbon monoxide and formate, and does not lie on the methionine recycle pathway. This Bacillus licheniformis (strain ATCC 14580 / DSM 13 / JCM 2505 / CCUG 7422 / NBRC 12200 / NCIMB 9375 / NCTC 10341 / NRRL NRS-1264 / Gibson 46) protein is Acireductone dioxygenase.